A 114-amino-acid polypeptide reads, in one-letter code: Notch-regulated ankyrin repeat-containing protein (114 aa).

ANK repeat units lie at residues 50–79 (EGQT…DIRL) and 83–112 (DGWS…YAAS).

This sequence belongs to the NRARP family. Interacts with LEF1.

In terms of biological role, downstream effector of Notch signaling. Involved in the regulation of liver cancer cells self-renewal. Involved in angiogenesis acting downstream of Notch at branch points to regulate vascular density. Proposed to integrate endothelial Notch and Wnt signaling to control stalk cell proliferation and to stablilize new endothelial connections during angiogenesis. During somitogenesis involved in maintenance of proper somite segmentation and proper numbers of somites and vertebrae. Required for proper anterior-posterior somite patterning. Proposed to function in a negative feedback loop to destabilize Notch 1 intracellular domain (NICD) and down-regulate the Notch signal, preventing expansion of the Notch signal into the anterior somite domain. The polypeptide is Notch-regulated ankyrin repeat-containing protein (NRARP) (Homo sapiens (Human)).